We begin with the raw amino-acid sequence, 243 residues long: Histone H2B.2 (243 aa).

Ala2 carries the post-translational modification N,N,N-trimethylalanine; alternate. Ala2 is subject to N,N-dimethylalanine; alternate. At Ala2 the chain carries N-methylalanine; alternate. The tract at residues 67–145 (PDERSLPVGE…KKKKKKKRDD (79 aa)) is disordered. Basic and acidic residues predominate over residues 120–132 (GTLKKTDKVEKKQ). Basic residues predominate over residues 133-142 (ENKKKKKKKK).

The protein belongs to the histone H2B family. As to quaternary structure, the nucleosome is a histone octamer containing two molecules each of H2A, H2B, H3 and H4 assembled in one H3-H4 heterotetramer and two H2A-H2B heterodimers. The octamer wraps approximately 147 bp of DNA. Post-translationally, can be acetylated to form H2BK6ac.

It is found in the nucleus. The protein resides in the chromosome. Its function is as follows. Core component of nucleosome. Nucleosomes wrap and compact DNA into chromatin, limiting DNA accessibility to the cellular machineries which require DNA as a template. Histones thereby play a central role in transcription regulation, DNA repair, DNA replication and chromosomal stability. DNA accessibility is regulated via a complex set of post-translational modifications of histones, also called histone code, and nucleosome remodeling. In Arabidopsis thaliana (Mouse-ear cress), this protein is Histone H2B.2.